Here is a 237-residue protein sequence, read N- to C-terminus: Adenosine 5'-phosphosulfate reductase (237 aa).

Positions 123, 124, 206, and 209 each coordinate [4Fe-4S] cluster. Residue Cys232 is the Nucleophile; cysteine thiosulfonate intermediate of the active site.

This sequence belongs to the PAPS reductase family. CysH subfamily. It depends on [4Fe-4S] cluster as a cofactor.

It localises to the cytoplasm. It catalyses the reaction [thioredoxin]-disulfide + sulfite + AMP + 2 H(+) = adenosine 5'-phosphosulfate + [thioredoxin]-dithiol. Its pathway is sulfur metabolism; hydrogen sulfide biosynthesis; sulfite from sulfate. Catalyzes the formation of sulfite from adenosine 5'-phosphosulfate (APS) using thioredoxin as an electron donor. In Mycobacteroides abscessus (strain ATCC 19977 / DSM 44196 / CCUG 20993 / CIP 104536 / JCM 13569 / NCTC 13031 / TMC 1543 / L948) (Mycobacterium abscessus), this protein is Adenosine 5'-phosphosulfate reductase.